Reading from the N-terminus, the 2055-residue chain is Multiple PDZ domain protein (2055 aa).

The region spanning 1-63 (MLETIDKNRA…SLQQLKDQVN (63 aa)) is the L27 domain. One can recognise a PDZ 1 domain in the interval 138–225 (IFELLKPPCG…TVQLVIARGS (88 aa)). At Ser-231 the chain carries Phosphoserine. Positions 258-338 (TIELVNDGSG…RVKLMIARGA (81 aa)) constitute a PDZ 2 domain. A compositionally biased stretch (low complexity) spans 348–360 (LGITLSSSTSSTS). Residues 348–372 (LGITLSSSTSSTSEMRVDASTQKND) are disordered. 3 PDZ domains span residues 378-464 (DVEL…MRKG), 546-627 (VAHV…CRRT), and 693-779 (SIEL…VAKP). A phosphoserine mark is found at Ser-783 and Ser-1066. Residues 996–1077 (TVTIAKGSSS…IGPDIKITYV (82 aa)) form the PDZ 6 domain. A disordered region spans residues 1111–1130 (PELPEREEGEGEESELQNAA). A PDZ 7 domain is found at 1139 to 1231 (RVELWREPSK…PVVFMVQSII (93 aa)). Arg-1158 is modified (omega-N-methylarginine). Positions 1264–1274 (LTTDQAPSQSE) are enriched in polar residues. The disordered stretch occupies residues 1264–1299 (LTTDQAPSQSESETEKPALCNVPPSSPSVFSEMGSD). The PDZ 8 domain maps to 1338–1421 (VIELEKGQSG…KVKIIFIRNA (84 aa)). The span at 1435–1445 (ADSPSSTSDSP) shows a compositional bias: low complexity. The tract at residues 1435–1459 (ADSPSSTSDSPQNKEVEPCSTTSAS) is disordered. Positions 1471–1552 (QLELPKDQGG…TVKLTVRAEN (82 aa)) constitute a PDZ 9 domain. The interval 1557–1597 (AVPSSAVTVSGERKDNSQTPAVPAPDLEPIPSTSRSSTPAV) is disordered. PDZ domains are found at residues 1614-1697 (TIEI…YRDE) and 1710-1792 (TIEL…GRVK). Residues 1795 to 1834 (PFHSERRPSQSSQVSESSLSSFTPPLSGINTSESLESNSK) are disordered. Ser-1803 and Ser-1809 each carry phosphoserine. The span at 1803–1815 (SQSSQVSESSLSS) shows a compositional bias: low complexity. Polar residues predominate over residues 1816–1834 (FTPPLSGINTSESLESNSK). PDZ domains are found at residues 1847 to 1933 (TVEI…VAGG) and 1972 to 2055 (TITL…MVLS).

Interacts with CLDN5, DLG4, GRIN1, SYNGAP1, CAMK2A and CAMK2B, HTR2A, HTR2B, HTR2C, PLEKHA1/TAPP1 and PLEKHA2/TAPP2. Interacts with F11R/JAM, CLDN1, NG2, CXADR, CRB1, MPP4 and PALS1. Interacts with FAT4 (via cytoplasmic domain). Interacts with DLL1. As to expression, in the brain, it is strongly expressed in the choroid plexus. Within the hippocampal formation, strongest expression was seen in the soma of CA1-4 pyramidal cells. Expressed in most neocortical regions with the strongest expression in piriform cortex and amygdaloid nuclei but also detected in the subiculum and olfactory bulb. In the cerebellum, the highest level of expression was found in Purkinje cells. Moderately expressed in the granular layer and molecular layer. Expressed in the pontine nuclei, parts of spinal trigeminal nuclei, and the principal sensory trigeminal nuclei of the metencephalon. Expressed in all thalamic and hypothalamic nuclei, and the substantia nigra (at protein level). Ubiquitously expressed.

The protein resides in the cell membrane. The protein localises to the apical cell membrane. Its subcellular location is the postsynaptic density. It is found in the cell projection. It localises to the dendrite. The protein resides in the cell junction. The protein localises to the tight junction. Its subcellular location is the synapse. It is found in the synaptosome. Member of the NMDAR signaling complex that may play a role in control of AMPAR potentiation and synaptic plasticity in excitatory synapses. Promotes clustering of HT2RC at the cell surface. This chain is Multiple PDZ domain protein (Mpdz), found in Mus musculus (Mouse).